Reading from the N-terminus, the 359-residue chain is Peptide chain release factor 1 (359 aa).

N5-methylglutamine is present on Gln236.

It belongs to the prokaryotic/mitochondrial release factor family. Post-translationally, methylated by PrmC. Methylation increases the termination efficiency of RF1.

It localises to the cytoplasm. Functionally, peptide chain release factor 1 directs the termination of translation in response to the peptide chain termination codons UAG and UAA. This chain is Peptide chain release factor 1, found in Streptococcus pyogenes serotype M1.